The sequence spans 450 residues: Tripartite motif-containing protein 77 (450 aa).

The segment at 15 to 56 adopts an RING-type zinc-finger fold; it reads CSICTDYLTDPVTICCGHRFCSPCLCLLWEDTLTPNCCPVCR. A B box-type zinc finger spans residues 88 to 131; that stretch reads SAMLICRRHQEIKNLICETDRSLLCFLCSQSPRHATHKHYMTRE. Residues C93, H96, C115, and H121 each coordinate Zn(2+). The B30.2/SPRY domain maps to 269-450; the sequence is QLSAWTITGV…LRPFICHGSK (182 aa).

The protein belongs to the TRIM/RBCC family.

The sequence is that of Tripartite motif-containing protein 77 (TRIM77) from Homo sapiens (Human).